Reading from the N-terminus, the 266-residue chain is Luciferase (266 aa).

Residues 22–41 (GLAVTCCAVAVASIIAFPYI) traverse the membrane as a helical segment.

The protein belongs to the fungal luciferase family.

The protein localises to the membrane. The catalysed reaction is 3-hydroxyhispidin + O2 = (E)-caffeoylpyruvate + hnu + CO2. It carries out the reaction 3-hydroxyhispidin + O2 = 4-[(E)-2-(3,4-dihydroxyphenyl)ethenyl]-1,7-dihydroxy-2,3,5-trioxabicyclo[2.2.2]oct-7-en-6-one. In terms of biological role, luciferase; part of the gene cluster that mediates the fungal bioluminescence cycle. Uses the fungal luciferin 3-hydroxyhispidin as a substrate to produce an endoperoxide as a high-energy intermediate with decomposition that yields oxyluciferin (also known as caffeoylpyruvate) and light emission. The fungal bioluminescence cycle begins with the hispidin synthetase that catalyzes the formation of hispidin which is further hydroxylated by the hispidin-3-hydroxylase, yielding the fungal luciferin 3-hydroxyhispidin. The luciferase then produces an endoperoxide as a high-energy intermediate with decomposition that yields oxyluciferin and light emission. Oxyluciferin can be recycled to caffeic acid by caffeoylpyruvate hydrolase. The polypeptide is Luciferase (Armillaria mellea (Honey mushroom)).